A 239-amino-acid polypeptide reads, in one-letter code: Ribosomal RNA small subunit methyltransferase G (239 aa).

S-adenosyl-L-methionine contacts are provided by residues glycine 78, phenylalanine 83, 129–130 (AE), and arginine 148.

This sequence belongs to the methyltransferase superfamily. RNA methyltransferase RsmG family.

The protein resides in the cytoplasm. In terms of biological role, specifically methylates the N7 position of a guanine in 16S rRNA. The sequence is that of Ribosomal RNA small subunit methyltransferase G from Clostridium perfringens (strain SM101 / Type A).